The following is a 233-amino-acid chain: Lysine exporter LysE (233 aa).

Topologically, residues 1 to 2 are cytoplasmic; sequence ME. Residues 3–23 form a helical membrane-spanning segment; it reads IFITGLLLGASLLLSIGPQNV. At 24 to 65 the chain is on the periplasmic side; it reads LVIKQGIKREGLIAVLLVCLISDVFLFIAGTLGVDLLSNAAP. The chain crosses the membrane as a helical span at residues 66–86; sequence IVLDIMRWGGIAYLLWFAVMA. The Cytoplasmic segment spans residues 87-143; that stretch reads AKDAMTNKVEAPQIIEETEPTVPDDTPLGGSAVATDTRNRVRVEVSVDKQRVWVKPM. Residues 144 to 164 traverse the membrane as a helical segment; sequence LMAIVLTWLNPNAYLDAFVFI. Topologically, residues 165–176 are periplasmic; that stretch reads GGVGAQYGDTGR. The helical transmembrane segment at 177–197 threads the bilayer; it reads WIFAAGAFAASLIWFPLVGFG. The Cytoplasmic segment spans residues 198 to 212; the sequence is AAALSRPLSSPKVWR. A helical membrane pass occupies residues 213–233; that stretch reads WINVVVAVVMTALAIKLMLMG.

This sequence belongs to the LysE/ArgO transporter (TC 2.A.75) family.

It localises to the cell inner membrane. Transport process is modulated by three forces: the membrane potential, the chemical potential of lysine, and the proton gradient. Strongly inhibited by CCCP and valinomycin. Catalyzes the efflux of L-lysine. Can also export L-arginine and L-citrulline. The lysEG system prevents bacteriostasis due to elevated L-lysine or L-arginine concentrations that arise during growth in the presence of peptides or in mutants possessing a deregulated biosynthesis pathway. In vitro, can also export D-lysine during biotechnological production of D-amino acids. This chain is Lysine exporter LysE, found in Corynebacterium glutamicum (strain ATCC 13032 / DSM 20300 / JCM 1318 / BCRC 11384 / CCUG 27702 / LMG 3730 / NBRC 12168 / NCIMB 10025 / NRRL B-2784 / 534).